Here is a 562-residue protein sequence, read N- to C-terminus: Serine palmitoyltransferase 2 (562 aa).

A helical membrane pass occupies residues 61-81 (LITYLNYLILIILGHIHDFLG). The residue at position 365 (lysine 365) is an N6-(pyridoxal phosphate)lysine.

It belongs to the class-II pyridoxal-phosphate-dependent aminotransferase family. Pyridoxal 5'-phosphate is required as a cofactor.

It localises to the membrane. The enzyme catalyses L-serine + hexadecanoyl-CoA + H(+) = 3-oxosphinganine + CO2 + CoA. It participates in lipid metabolism; sphingolipid metabolism. The polypeptide is Serine palmitoyltransferase 2 (LCB2) (Kluyveromyces lactis (strain ATCC 8585 / CBS 2359 / DSM 70799 / NBRC 1267 / NRRL Y-1140 / WM37) (Yeast)).